Here is a 461-residue protein sequence, read N- to C-terminus: Ribitol-5-phosphate transferase FKTN (461 aa).

The Cytoplasmic portion of the chain corresponds to 1-7 (MSRINKN). The interval 6–27 (KNVVLALLTLTSSAFLLFQLYY) is required and sufficient for interaction with POMGNT1. Residues 8-28 (VVLALLTLTSSAFLLFQLYYY) traverse the membrane as a helical; Signal-anchor for type II membrane protein segment. At 29–461 (KHYLSARNGP…SEWDEVIQLY (433 aa)) the chain is on the lumenal side. N-linked (GlcNAc...) asparagine glycosylation is present at Asn-92.

It belongs to the LicD transferase family. Forms a complex composed of FKTN/fukutin, FKRP and RXYLT1/TMEM5. Interacts (via transmembrane domain) with POMGNT1; the interaction is direct and is required for normal POMGNT1 location in Golgi membranes. As to expression, expressed in the retina, with highest levels found in the inner segments of photoreceptors and the outer plexiform layer (at protein level). Expressed at lower levels in the inner and outer nuclear layers, the inner plexiform layers, and the ganglion cell layers of the retina (at protein level). Expressed in the heart, brain, spleen, lung, liver, skeletal muscle, kidney and testis.

The protein localises to the golgi apparatus membrane. It localises to the cytoplasm. It is found in the nucleus. Its subcellular location is the endoplasmic reticulum. The catalysed reaction is 3-O-[beta-D-GalNAc-(1-&gt;3)-beta-D-GlcNAc-(1-&gt;4)-(O-6-P-alpha-D-Man)]-Thr-[protein] + CDP-L-ribitol = 3-O-[Rib-ol-P-3-beta-D-GalNAc-(1-&gt;3)-beta-D-GlcNAc-(1-&gt;4)-(O-6-P-alpha-D-Man)]-Thr-[protein] + CMP + H(+). It participates in protein modification; protein glycosylation. In terms of biological role, catalyzes the transfer of CDP-ribitol to the distal N-acetylgalactosamine of the phosphorylated O-mannosyl trisaccharide (N-acetylgalactosamine-beta-3-N-acetylglucosamine-beta-4-(phosphate-6-)mannose), a carbohydrate structure present in alpha-dystroglycan (DAG1). This constitutes the first step in the formation of the ribitol 5-phosphate tandem repeat which links the phosphorylated O-mannosyl trisaccharide to the ligand binding moiety composed of repeats of 3-xylosyl-alpha-1,3-glucuronic acid-beta-1. Required for normal location of POMGNT1 in Golgi membranes, and for normal POMGNT1 activity. May interact with and reinforce a large complex encompassing the outside and inside of muscle membranes. Could be involved in brain development. In Mus musculus (Mouse), this protein is Ribitol-5-phosphate transferase FKTN.